A 42-amino-acid polypeptide reads, in one-letter code: Proline-rich antimicrobial peptide 2 (42 aa).

In terms of tissue distribution, hemolymph.

Its subcellular location is the secreted. Antimicrobial protein. Has antibacterial activity against the Gram-positive bacterium M.luteus (MIC=8.6 uM). Lacks antibacterial activity against the Gram-positive bacteria B.circulans, L.monocytogenes, S.aureus, and S.lutea, and the Gram-negative bacteria E.coli D31, E.coli ATCC 25922, and S.typhimurium. Lacks antifungal activity against S.cerevisiae, P.pastoris, Z.marxianus, C.albicans, C.fructus, C.wickerhamii, A.niger, F.oxysporum, and T.harizianum. The chain is Proline-rich antimicrobial peptide 2 from Galleria mellonella (Greater wax moth).